The chain runs to 281 residues: RAD52 motif-containing protein 1 (281 aa).

The interval Met-1 to Lys-92 is necessary for nuclear localization and for nucleolar accumulation in response to heat shock. The RRM domain occupies Lys-15–Arg-98. Residues Pro-90–Lys-133 are necessary for nuclear and nucleolar localization.

In terms of assembly, homodimer.

It is found in the nucleus. Its subcellular location is the cytoplasm. The protein resides in the nucleolus. It localises to the cajal body. The protein localises to the PML body. Functionally, may confer resistance to the antitumor agent cisplatin. Binds to DNA and RNA. This chain is RAD52 motif-containing protein 1 (Rdm1), found in Mus musculus (Mouse).